The sequence spans 165 residues: Putative TRAP transporter small permease protein HI_0051 (165 aa).

Transmembrane regions (helical) follow at residues 20–40, 51–71, 94–114, and 136–156; these read LEYL…FNSV, FSEE…IILV, IVLI…AYGA, and LYLA…FSMI.

It belongs to the TRAP transporter small permease family.

It is found in the cell inner membrane. In Haemophilus influenzae (strain ATCC 51907 / DSM 11121 / KW20 / Rd), this protein is Putative TRAP transporter small permease protein HI_0051.